We begin with the raw amino-acid sequence, 419 residues long: ATP phosphoribosyltransferase regulatory subunit (419 aa).

The protein belongs to the class-II aminoacyl-tRNA synthetase family. HisZ subfamily. In terms of assembly, heteromultimer composed of HisG and HisZ subunits.

The protein resides in the cytoplasm. The protein operates within amino-acid biosynthesis; L-histidine biosynthesis; L-histidine from 5-phospho-alpha-D-ribose 1-diphosphate: step 1/9. Required for the first step of histidine biosynthesis. May allow the feedback regulation of ATP phosphoribosyltransferase activity by histidine. This is ATP phosphoribosyltransferase regulatory subunit from Ruminiclostridium cellulolyticum (strain ATCC 35319 / DSM 5812 / JCM 6584 / H10) (Clostridium cellulolyticum).